The primary structure comprises 293 residues: Bifunctional protein FolD 1 (293 aa).

Residues 174 to 176 (GRS) and Thr240 contribute to the NADP(+) site.

It belongs to the tetrahydrofolate dehydrogenase/cyclohydrolase family. In terms of assembly, homodimer.

It catalyses the reaction (6R)-5,10-methylene-5,6,7,8-tetrahydrofolate + NADP(+) = (6R)-5,10-methenyltetrahydrofolate + NADPH. The catalysed reaction is (6R)-5,10-methenyltetrahydrofolate + H2O = (6R)-10-formyltetrahydrofolate + H(+). It participates in one-carbon metabolism; tetrahydrofolate interconversion. In terms of biological role, catalyzes the oxidation of 5,10-methylenetetrahydrofolate to 5,10-methenyltetrahydrofolate and then the hydrolysis of 5,10-methenyltetrahydrofolate to 10-formyltetrahydrofolate. The polypeptide is Bifunctional protein FolD 1 (Saccharopolyspora erythraea (strain ATCC 11635 / DSM 40517 / JCM 4748 / NBRC 13426 / NCIMB 8594 / NRRL 2338)).